The sequence spans 416 residues: Putative UV-damage repair protein UvrX (416 aa).

The 185-residue stretch at 12-196 (ILCVDMKSFY…RPLSKMWGIG (185 aa)) folds into the UmuC domain. Residues Asp-16 and Asp-115 each coordinate Mg(2+). Glu-116 is a catalytic residue.

The protein belongs to the DNA polymerase type-Y family. Mg(2+) serves as cofactor.

The sequence is that of Putative UV-damage repair protein UvrX (uvrX) from Bacillus subtilis (strain 168).